Reading from the N-terminus, the 2276-residue chain is Protein Ycf2 (2276 aa).

ATP is bound at residue 1621-1628 (GSIGTGRS).

The protein belongs to the Ycf2 family.

It is found in the plastid. The protein localises to the chloroplast stroma. In terms of biological role, probable ATPase of unknown function. Its presence in a non-photosynthetic plant (Epifagus virginiana) and experiments in tobacco indicate that it has an essential function which is probably not related to photosynthesis. This is Protein Ycf2 from Guizotia abyssinica (Niger).